Consider the following 261-residue polypeptide: Phosphoinositide-3-kinase-interacting protein 1 (261 aa).

The signal sequence occupies residues 1–21 (MLLAWVRTILVSNMLLAEAYG). The Extracellular portion of the chain corresponds to 22–166 (SGGCFWDNGH…NSKEKKDLGT (145 aa)). One can recognise a Kringle domain in the interval 24–101 (GCFWDNGHLY…EKRPCQDLRC (78 aa)). 3 disulfide bridges follow: Cys-25-Cys-101, Cys-46-Cys-82, and Cys-70-Cys-96. Basic and acidic residues predominate over residues 90 to 101 (APEKRPCQDLRC). The segment at 90 to 122 (APEKRPCQDLRCPDTTSQGLPTSATETEEAAEV) is disordered. Residues 167–187 (LGYVLGITMMVIIVVIGAGIV) form a helical membrane-spanning segment. The Cytoplasmic segment spans residues 188–261 (LGYTYKRGKD…LMGQAGTPGA (74 aa)).

It localises to the cell membrane. Its function is as follows. Negative regulator of hepatic phosphatidylinositol 3-kinase (PI3K) activity. The sequence is that of Phosphoinositide-3-kinase-interacting protein 1 (PIK3IP1) from Bos taurus (Bovine).